Reading from the N-terminus, the 393-residue chain is Methylthioribose-1-phosphate isomerase (393 aa).

The Proton donor role is filled by Asp-265.

The protein belongs to the eIF-2B alpha/beta/delta subunits family. MtnA subfamily.

Its subcellular location is the cytoplasm. The protein localises to the nucleus. The enzyme catalyses 5-(methylsulfanyl)-alpha-D-ribose 1-phosphate = 5-(methylsulfanyl)-D-ribulose 1-phosphate. The protein operates within amino-acid biosynthesis; L-methionine biosynthesis via salvage pathway; L-methionine from S-methyl-5-thio-alpha-D-ribose 1-phosphate: step 1/6. Its function is as follows. Catalyzes the interconversion of methylthioribose-1-phosphate (MTR-1-P) into methylthioribulose-1-phosphate (MTRu-1-P). The chain is Methylthioribose-1-phosphate isomerase from Cryptococcus neoformans var. neoformans serotype D (strain B-3501A) (Filobasidiella neoformans).